The chain runs to 1465 residues: Myomesin-2 (1465 aa).

The tract at residues Ala38–Thr61 is disordered. Residues Gln41–Thr61 are compositionally biased toward low complexity. Ig-like C2-type domains are found at residues Pro154–Val245 and Pro266–Phe371. 5 consecutive Fibronectin type-III domains span residues Ala385–Pro480, Pro513–Val608, Ala614–Ala707, Val710–Glu812, and Pro815–Gly912. Ig-like C2-type domains lie at Pro904–Glu1002, Pro1130–Ser1211, and Arg1345–Ser1434. Residues Ile1442–Gln1465 form a disordered region.

As to quaternary structure, interacts with TTN/titin.

The protein resides in the cytoplasm. Its subcellular location is the myofibril. It is found in the sarcomere. It localises to the m line. In terms of biological role, major component of the vertebrate myofibrillar M band. Binds myosin, titin, and light meromyosin. This binding is dose dependent. The chain is Myomesin-2 (MYOM2) from Homo sapiens (Human).